We begin with the raw amino-acid sequence, 285 residues long: Pantothenate synthetase (285 aa).

30 to 37 (MGFLHEGH) lines the ATP pocket. The Proton donor role is filled by histidine 37. Glutamine 61 is a binding site for (R)-pantoate. Glutamine 61 serves as a coordination point for beta-alanine. Residue 147 to 150 (GQKD) participates in ATP binding. Glutamine 153 serves as a coordination point for (R)-pantoate. ATP is bound by residues valine 176 and 184 to 187 (KSSR).

Belongs to the pantothenate synthetase family. Homodimer.

Its subcellular location is the cytoplasm. It catalyses the reaction (R)-pantoate + beta-alanine + ATP = (R)-pantothenate + AMP + diphosphate + H(+). It functions in the pathway cofactor biosynthesis; (R)-pantothenate biosynthesis; (R)-pantothenate from (R)-pantoate and beta-alanine: step 1/1. Functionally, catalyzes the condensation of pantoate with beta-alanine in an ATP-dependent reaction via a pantoyl-adenylate intermediate. In Listeria monocytogenes serovar 1/2a (strain ATCC BAA-679 / EGD-e), this protein is Pantothenate synthetase.